The primary structure comprises 234 residues: MRDEIFKEPIKKQFEFDDFVVSVFDDMIGRSVPFYDVSGKLVSEILAKILPAKAHVIDLGCSTATSLLLLNQLRDDLVLEGVDSSSAMIENARKKAKAYGAKIKFSVGDVLESQICQMDAVMMNYTLQFIRPPKRAQLVKSIYDGLNEGGVFVFSEKIIYEDKKFAKNMIEIYENYKEKQGYSRYEIAQKREALENVLIPYTEEENRTLALGAGFKRVESVFKWGNFMTFLAFK.

Residues Tyr35, 60 to 62 (GCS), 109 to 110 (DV), Asn124, and Arg191 contribute to the S-adenosyl-L-methionine site.

The protein belongs to the class I-like SAM-binding methyltransferase superfamily. Cx-SAM synthase family. As to quaternary structure, homodimer.

It catalyses the reaction prephenate + S-adenosyl-L-methionine = carboxy-S-adenosyl-L-methionine + 3-phenylpyruvate + H2O. Functionally, catalyzes the conversion of S-adenosyl-L-methionine (SAM) to carboxy-S-adenosyl-L-methionine (Cx-SAM). This is Carboxy-S-adenosyl-L-methionine synthase from Campylobacter curvus (strain 525.92).